Consider the following 354-residue polypeptide: Guanine nucleotide-binding protein G(i) subunit alpha-3 (354 aa).

Residue glycine 2 is the site of N-myristoyl glycine attachment. Cysteine 3 is lipidated: S-palmitoyl cysteine. Residues 32 to 354 (KEVKLLLLGA…KNNLKECGLY (323 aa)) form the G-alpha domain. A G1 motif region spans residues 35–48 (KLLLLGAGESGKST). GTP is bound by residues glycine 42, glutamate 43, serine 44, glycine 45, lysine 46, serine 47, threonine 48, aspartate 150, serine 151, leucine 175, arginine 176, threonine 177, arginine 178, valine 179, lysine 180, threonine 181, valine 201, glycine 203, asparagine 269, lysine 270, aspartate 272, leucine 273, cysteine 325, alanine 326, and threonine 327. Serine 47 contributes to the Mg(2+) binding site. Residues 173-181 (DVLRTRVKT) form a G2 motif region. Residue threonine 181 participates in Mg(2+) binding. The tract at residues 196-205 (FKMFDVGGQR) is G3 motif. A G4 motif region spans residues 265-272 (ILFLNKKD). Positions 324–329 (TCATDT) are G5 motif.

This sequence belongs to the G-alpha family. G(i/o/t/z) subfamily. In terms of assembly, heterotrimeric G proteins are composed of 3 units; alpha, beta and gamma. The alpha subunit contains the guanine nucleotide binding site. GTP binding causes dissociation of the heterotrimer, liberating the individual subunits so that they can interact with downstream effector proteins. Forms a complex with CCDC88A/GIV and EGFR which leads to enhanced EGFR signaling and triggering of cell migration; ligand stimulation is required for recruitment of GNAI3 to the complex. Interacts (inactive GDP-bound form) with CCDC88A/GIV (via GBA motif); the interaction leads to activation of GNAI3. Interacts (inactive GDP-bound form) with CCDC88C/DAPLE (via GBA motif); the interaction leads to activation of GNAI3. Interacts (inactive GDP-bound form) with NUCB1 (via GBA motif) and NUCB2 (via GBA motif); the interaction leads to activation of GNAI3. Interacts (inactive GDP-bound form) with PLCD4 (via GBA motif); the interaction leads to activation of GNAI3. Interacts with INSR; the interaction is probably mediated by CCDC88A/GIV. Interacts with GPSM1. Interacts (GDP-bound form) with GPSM2 (via GoLoco domains). Does not interact with RGS2. Interacts with RGS8 and RGS10; this strongly enhances the intrinsic GTPase activity. Interacts with RGS12. Interacts with RGS16; this strongly enhances the intrinsic GTPase activity. Interacts (via active GTP- or inactive GDP-bound form) with RGS14. Interacts (via active GTP-bound form) with TRPC5 (via ANK repeats) in a homotetrameric ion channel; the interaction is direct and activates the channel activity. In terms of tissue distribution, ubiquitous.

It is found in the cytoplasm. The protein localises to the cell membrane. The protein resides in the cytoskeleton. It localises to the microtubule organizing center. Its subcellular location is the centrosome. Its function is as follows. Heterotrimeric guanine nucleotide-binding proteins (G proteins) function as transducers downstream of G protein-coupled receptors (GPCRs) in numerous signaling cascades. The alpha chain contains the guanine nucleotide binding site and alternates between an active, GTP-bound state and an inactive, GDP-bound state. Signaling by an activated GPCR promotes GDP release and GTP binding. The alpha subunit has a low GTPase activity that converts bound GTP to GDP, thereby terminating the signal. Both GDP release and GTP hydrolysis are modulated by numerous regulatory proteins. Signaling is mediated via effector proteins, such as adenylate cyclase. Inhibits adenylate cyclase activity, leading to decreased intracellular cAMP levels. Stimulates the activity of receptor-regulated K(+) channels. The active GTP-bound form prevents the association of RGS14 with centrosomes and is required for the translocation of RGS14 from the cytoplasm to the plasma membrane. May play a role in cell division. The active GTP-bound form activates the calcium permeant TRPC5 ion channels. The polypeptide is Guanine nucleotide-binding protein G(i) subunit alpha-3 (Gnai3) (Rattus norvegicus (Rat)).